The chain runs to 434 residues: Enolase (434 aa).

Substrate is bound by residues His-158 and Glu-167. Glu-210 serves as the catalytic Proton donor. The Mg(2+) site is built by Asp-245, Glu-294, and Asp-319. Substrate contacts are provided by Glu-294 and Asp-319. The active-site Proton acceptor is Lys-344. Residues 371–374 (SHRS) and Lys-395 contribute to the substrate site.

The protein belongs to the enolase family. Homodimer. It depends on Mg(2+) as a cofactor.

It is found in the cytoplasm. It carries out the reaction (2R)-2-phosphoglycerate = phosphoenolpyruvate + H2O. It functions in the pathway carbohydrate degradation; glycolysis; pyruvate from D-glyceraldehyde 3-phosphate: step 4/5. The protein is Enolase (ENO) of Schistosoma japonicum (Blood fluke).